Consider the following 342-residue polypeptide: MTTLTITRPDDWHLHLRDGDVLTDTVRDSGRYNGRALIMPNLVPPVTTTEQALSYRERIQAENKSDSFAPLMSLYLTEKTTSEEIRKAKATGHIVAAKLYPAGATTNSDSGVSDIKKVYPILKTMQEEGMLLLIHGEVTTHDVDIFDREKTFLDTVLAPIVNDFPELKIVLEHITTKDAADFVKNAGPNVAATITAHHLLFNRNHMLVGGIKPHFYCLPILKRNTHQQALVEAATSGNPKFFLGTDSAPHAKDKKEAACGCAGSYTAHASIELYAEVFENEGKLENLEAFASFNGPDFYNLPRNTDTITLVKEAWIAPETMAFGNDFVVPIRAGEAVEWLVK.

Positions 13 and 15 each coordinate Zn(2+). Substrate contacts are provided by residues 15-17 and N41; that span reads HLR. Residues K98, H135, and H173 each contribute to the Zn(2+) site. K98 is modified (N6-carboxylysine). H135 is a binding site for substrate. A substrate-binding site is contributed by L218. D246 is a binding site for Zn(2+). Residue D246 is part of the active site. 2 residues coordinate substrate: H250 and A262.

It belongs to the metallo-dependent hydrolases superfamily. DHOase family. Class II DHOase subfamily. In terms of assembly, homodimer. Zn(2+) is required as a cofactor.

The catalysed reaction is (S)-dihydroorotate + H2O = N-carbamoyl-L-aspartate + H(+). Its pathway is pyrimidine metabolism; UMP biosynthesis via de novo pathway; (S)-dihydroorotate from bicarbonate: step 3/3. Functionally, catalyzes the reversible cyclization of carbamoyl aspartate to dihydroorotate. The polypeptide is Dihydroorotase (Aliivibrio fischeri (strain MJ11) (Vibrio fischeri)).